Consider the following 107-residue polypeptide: Small ribosomal subunit protein uS10 (107 aa).

It belongs to the universal ribosomal protein uS10 family. Part of the 30S ribosomal subunit.

Its function is as follows. Involved in the binding of tRNA to the ribosomes. The polypeptide is Small ribosomal subunit protein uS10 (Deinococcus geothermalis (strain DSM 11300 / CIP 105573 / AG-3a)).